Consider the following 226-residue polypeptide: MSKKGKKYIEAFSKVDKNKFYNIEDAILLLKEIKFAKFDETIDISINLNLKKNHTVRDTIVLPNQFMKPKRILVFAKGDRADEARAFGATHVGDDDLINKIKSGWDEFDVVVATPDMMKDVGRLGPILGKRGLMPNPKTQTVTNNLKDAINSLKKGRTEFRANKNGVISFSFGKSSMDNEKIKENYEEFVKEVVKKRPSDLKGAFIDSIYISSTMGPSIKVNFVWR.

The protein belongs to the universal ribosomal protein uL1 family. In terms of assembly, part of the 50S ribosomal subunit.

Binds directly to 23S rRNA. The L1 stalk is quite mobile in the ribosome, and is involved in E site tRNA release. Functionally, protein L1 is also a translational repressor protein, it controls the translation of the L11 operon by binding to its mRNA. The protein is Large ribosomal subunit protein uL1 of Borreliella burgdorferi (strain ZS7) (Borrelia burgdorferi).